Reading from the N-terminus, the 204-residue chain is Hydrophilin YNL190W (204 aa).

A signal peptide spans methionine 1–alanine 20. Residues serine 35–histidine 46 show a composition bias toward low complexity. Residues serine 35–proline 179 are disordered. The segment covering threonine 47 to lysine 59 has biased composition (basic residues). N-linked (GlcNAc...) asparagine glycans are attached at residues asparagine 55, asparagine 64, asparagine 75, asparagine 84, asparagine 95, asparagine 104, asparagine 115, asparagine 124, asparagine 135, asparagine 144, and asparagine 155. The segment covering glycine 67–lysine 79 has biased composition (basic residues). Basic residues predominate over residues glycine 87–lysine 99. Positions glycine 107–lysine 119 are enriched in basic residues. Basic residues predominate over residues glycine 127–lysine 139. Residues glycine 147–lysine 156 are compositionally biased toward basic residues. Asparagine 174 carries the GPI-anchor amidated asparagine lipid modification. Positions alanine 175 to leucine 204 are cleaved as a propeptide — removed in mature form.

The protein belongs to the PGA14 family. Post-translationally, the GPI-anchor is attached to the protein in the endoplasmic reticulum and serves to target the protein to the cell surface. There, the glucosamine-inositol phospholipid moiety is cleaved off and the GPI-modified mannoprotein is covalently attached via its lipidless GPI glycan remnant to the 1,6-beta-glucan of the outer cell wall layer.

It localises to the secreted. It is found in the cell wall. The protein localises to the membrane. In terms of biological role, hydrophilin which is essential to overcome the simple stress of the desiccation-rehydration process. The sequence is that of Hydrophilin YNL190W from Saccharomyces cerevisiae (strain ATCC 204508 / S288c) (Baker's yeast).